The sequence spans 209 residues: Uracil phosphoribosyltransferase (209 aa).

5-phospho-alpha-D-ribose 1-diphosphate-binding positions include Arg79, Arg104, and 131 to 139; that span reads DPMLATGGS. Uracil contacts are provided by residues Ile194 and 199-201; that span reads GDA. Asp200 is a binding site for 5-phospho-alpha-D-ribose 1-diphosphate.

Belongs to the UPRTase family. Mg(2+) is required as a cofactor.

It carries out the reaction UMP + diphosphate = 5-phospho-alpha-D-ribose 1-diphosphate + uracil. It participates in pyrimidine metabolism; UMP biosynthesis via salvage pathway; UMP from uracil: step 1/1. Allosterically activated by GTP. Its function is as follows. Catalyzes the conversion of uracil and 5-phospho-alpha-D-ribose 1-diphosphate (PRPP) to UMP and diphosphate. The sequence is that of Uracil phosphoribosyltransferase from Geobacillus kaustophilus (strain HTA426).